The primary structure comprises 448 residues: Allantoinase (448 aa).

6 residues coordinate Zn(2+): His-60, His-62, Lys-147, His-183, His-239, and Asp-312. N6-carboxylysine is present on Lys-147.

Belongs to the metallo-dependent hydrolases superfamily. Allantoinase family. As to quaternary structure, homotetramer. Requires Zn(2+) as cofactor. In terms of processing, carboxylation allows a single lysine to coordinate two zinc ions.

The catalysed reaction is (S)-allantoin + H2O = allantoate + H(+). Its pathway is nitrogen metabolism; (S)-allantoin degradation; allantoate from (S)-allantoin: step 1/1. Catalyzes the conversion of allantoin (5-ureidohydantoin) to allantoic acid by hydrolytic cleavage of the five-member hydantoin ring. This is Allantoinase from Deinococcus radiodurans (strain ATCC 13939 / DSM 20539 / JCM 16871 / CCUG 27074 / LMG 4051 / NBRC 15346 / NCIMB 9279 / VKM B-1422 / R1).